The primary structure comprises 66 residues: Large ribosomal subunit protein uL29 (66 aa).

This sequence belongs to the universal ribosomal protein uL29 family.

The polypeptide is Large ribosomal subunit protein uL29 (rpmC) (Helicobacter pylori (strain J99 / ATCC 700824) (Campylobacter pylori J99)).